A 152-amino-acid polypeptide reads, in one-letter code: MANCERTFIAIKPDGVQRGLVGEIIKRFEQKGFRLVGLKFMQASEDLLKEHYVDLKDRPFFAGLVKYMHSGPVVAMVWEGLNVVKTGRVMLGETNPADSKPGTIRGDFCIQVGRNIIHGSDSVESAEKEIGLWFHPEELVDYTSCAQNWIYE.

Residues Lys12, Phe60, Arg88, and Thr94 each coordinate ATP. A Glycyl lysine isopeptide (Lys-Gly) (interchain with G-Cter in ubiquitin) cross-link involves residue Lys100. Residues Arg105 and Asn115 each coordinate ATP. His118 serves as the catalytic Pros-phosphohistidine intermediate. A phosphoserine mark is found at Ser120, Ser122, and Ser125.

This sequence belongs to the NDK family. In terms of assembly, hexamer of two different chains: An and B (A6, A5B, A4B2, A3B3, A2B4, AB5, B6). Interacts with PRUNE1. Component of the SET complex, composed of at least ANP32A, APEX1, HMGB2, NME1, SET and TREX1. Within this complex, interacts directly with SET. Also interacts with TREX1, but only following translocation to the nucleus. Mg(2+) serves as cofactor. As to expression, isoform 1 is expressed in heart, brain, placenta, lung, liver, skeletal muscle, pancreas, spleen and thymus. Expressed in lung carcinoma cell lines but not in normal lung tissues. Isoform 2 is ubiquitously expressed and its expression is also related to tumor differentiation.

Its subcellular location is the cytoplasm. The protein localises to the nucleus. The enzyme catalyses a 2'-deoxyribonucleoside 5'-diphosphate + ATP = a 2'-deoxyribonucleoside 5'-triphosphate + ADP. It carries out the reaction a ribonucleoside 5'-diphosphate + ATP = a ribonucleoside 5'-triphosphate + ADP. Its activity is regulated as follows. Autophosphorylation at His-118 increases serine/threonine protein kinase activity of the enzyme. Interaction with the SET complex inhibits the endonuclease activity. Major role in the synthesis of nucleoside triphosphates other than ATP. The ATP gamma phosphate is transferred to the NDP beta phosphate via a ping-pong mechanism, using a phosphorylated active-site intermediate. Possesses nucleoside-diphosphate kinase, serine/threonine-specific protein kinase, geranyl and farnesyl pyrophosphate kinase, histidine protein kinase and 3'-5' exonuclease activities. Involved in cell proliferation, differentiation and development, signal transduction, G protein-coupled receptor endocytosis, and gene expression. Required for neural development including neural patterning and cell fate determination. During GZMA-mediated cell death, works in concert with TREX1. NME1 nicks one strand of DNA and TREX1 removes bases from the free 3' end to enhance DNA damage and prevent DNA end reannealing and rapid repair. This Homo sapiens (Human) protein is Nucleoside diphosphate kinase A (NME1).